The primary structure comprises 187 residues: UPF0669 protein C6orf120 homolog (187 aa).

Positions 1–23 (MVEYWKRNFFMVLVLQAFYLANC) are cleaved as a signal peptide. N-linked (GlcNAc...) asparagine glycosylation occurs at N47.

The protein belongs to the UPF0669 family.

It localises to the secreted. The chain is UPF0669 protein C6orf120 homolog from Xenopus tropicalis (Western clawed frog).